A 302-amino-acid polypeptide reads, in one-letter code: N-acetylmuramic acid 6-phosphate etherase (302 aa).

Positions 58–221 (IGESFLNGGR…STGAMVKTGK (164 aa)) constitute an SIS domain. Glutamate 86 (proton donor) is an active-site residue. Residue glutamate 117 is part of the active site.

This sequence belongs to the GCKR-like family. MurNAc-6-P etherase subfamily. Homodimer.

It catalyses the reaction N-acetyl-D-muramate 6-phosphate + H2O = N-acetyl-D-glucosamine 6-phosphate + (R)-lactate. The protein operates within amino-sugar metabolism; N-acetylmuramate degradation. In terms of biological role, specifically catalyzes the cleavage of the D-lactyl ether substituent of MurNAc 6-phosphate, producing GlcNAc 6-phosphate and D-lactate. This is N-acetylmuramic acid 6-phosphate etherase from Clostridium botulinum (strain Okra / Type B1).